Here is a 341-residue protein sequence, read N- to C-terminus: L-threonine 3-dehydrogenase (341 aa).

Cysteine 38 provides a ligand contact to Zn(2+). Residues threonine 40 and histidine 43 each act as charge relay system in the active site. Residues histidine 63, glutamate 64, cysteine 93, cysteine 96, cysteine 99, and cysteine 107 each contribute to the Zn(2+) site. NAD(+)-binding positions include isoleucine 175, aspartate 195, arginine 200, leucine 262–isoleucine 264, and isoleucine 286–tyrosine 287.

It belongs to the zinc-containing alcohol dehydrogenase family. In terms of assembly, homotetramer. Requires Zn(2+) as cofactor.

It localises to the cytoplasm. It catalyses the reaction L-threonine + NAD(+) = (2S)-2-amino-3-oxobutanoate + NADH + H(+). It participates in amino-acid degradation; L-threonine degradation via oxydo-reductase pathway; glycine from L-threonine: step 1/2. Its function is as follows. Catalyzes the NAD(+)-dependent oxidation of L-threonine to 2-amino-3-ketobutyrate. This is L-threonine 3-dehydrogenase from Escherichia coli O127:H6 (strain E2348/69 / EPEC).